We begin with the raw amino-acid sequence, 189 residues long: Large ribosomal subunit protein uL5 (189 aa).

The protein belongs to the universal ribosomal protein uL5 family. In terms of assembly, part of the 50S ribosomal subunit; part of the 5S rRNA/L5/L18/L25 subcomplex. Contacts the 5S rRNA and the P site tRNA. Forms a bridge to the 30S subunit in the 70S ribosome.

In terms of biological role, this is one of the proteins that bind and probably mediate the attachment of the 5S RNA into the large ribosomal subunit, where it forms part of the central protuberance. In the 70S ribosome it contacts protein S13 of the 30S subunit (bridge B1b), connecting the 2 subunits; this bridge is implicated in subunit movement. Contacts the P site tRNA; the 5S rRNA and some of its associated proteins might help stabilize positioning of ribosome-bound tRNAs. This chain is Large ribosomal subunit protein uL5, found in Kineococcus radiotolerans (strain ATCC BAA-149 / DSM 14245 / SRS30216).